The chain runs to 100 residues: Large ribosomal subunit protein uL23 (100 aa).

This sequence belongs to the universal ribosomal protein uL23 family. Part of the 50S ribosomal subunit. Contacts protein L29, and trigger factor when it is bound to the ribosome.

Functionally, one of the early assembly proteins it binds 23S rRNA. One of the proteins that surrounds the polypeptide exit tunnel on the outside of the ribosome. Forms the main docking site for trigger factor binding to the ribosome. In Shewanella sp. (strain MR-4), this protein is Large ribosomal subunit protein uL23.